The following is a 349-amino-acid chain: Anthranilate phosphoribosyltransferase (349 aa).

Residues Gly86, 89-90, Thr94, 96-99, 114-122, and Ser126 contribute to the 5-phospho-alpha-D-ribose 1-diphosphate site; these read GD, NIST, and KHGNKSASG. Anthranilate is bound at residue Gly86. Ser98 serves as a coordination point for Mg(2+). Residue Asn117 participates in anthranilate binding. Anthranilate is bound at residue Arg172. 2 residues coordinate Mg(2+): Asp231 and Glu232.

Belongs to the anthranilate phosphoribosyltransferase family. As to quaternary structure, homodimer. The cofactor is Mg(2+).

It carries out the reaction N-(5-phospho-beta-D-ribosyl)anthranilate + diphosphate = 5-phospho-alpha-D-ribose 1-diphosphate + anthranilate. The protein operates within amino-acid biosynthesis; L-tryptophan biosynthesis; L-tryptophan from chorismate: step 2/5. In terms of biological role, catalyzes the transfer of the phosphoribosyl group of 5-phosphorylribose-1-pyrophosphate (PRPP) to anthranilate to yield N-(5'-phosphoribosyl)-anthranilate (PRA). In Prochlorococcus marinus (strain MIT 9312), this protein is Anthranilate phosphoribosyltransferase.